The sequence spans 351 residues: sn-glycerol-3-phosphate import ATP-binding protein UgpC (351 aa).

The ABC transporter domain maps to 4-234 (ITLKDLVKSY…PATLFVAGFI (231 aa)). An ATP-binding site is contributed by 36–43 (GPSGCGKS).

Belongs to the ABC transporter superfamily. sn-glycerol-3-phosphate importer (TC 3.A.1.1.3) family. The complex is composed of two ATP-binding proteins (UgpC), two transmembrane proteins (UgpA and UgpE) and a solute-binding protein (UgpB).

It is found in the cell inner membrane. It catalyses the reaction sn-glycerol 3-phosphate(out) + ATP + H2O = sn-glycerol 3-phosphate(in) + ADP + phosphate + H(+). In terms of biological role, part of the ABC transporter complex UgpBAEC involved in sn-glycerol-3-phosphate (G3P) import. Responsible for energy coupling to the transport system. The protein is sn-glycerol-3-phosphate import ATP-binding protein UgpC of Ruegeria sp. (strain TM1040) (Silicibacter sp.).